Consider the following 273-residue polypeptide: Ribosomal RNA small subunit methyltransferase A (273 aa).

S-adenosyl-L-methionine-binding residues include Asn19, Leu21, Gly46, Glu71, Asp94, and Asn117.

This sequence belongs to the class I-like SAM-binding methyltransferase superfamily. rRNA adenine N(6)-methyltransferase family. RsmA subfamily.

The protein localises to the cytoplasm. It catalyses the reaction adenosine(1518)/adenosine(1519) in 16S rRNA + 4 S-adenosyl-L-methionine = N(6)-dimethyladenosine(1518)/N(6)-dimethyladenosine(1519) in 16S rRNA + 4 S-adenosyl-L-homocysteine + 4 H(+). Its function is as follows. Specifically dimethylates two adjacent adenosines (A1518 and A1519) in the loop of a conserved hairpin near the 3'-end of 16S rRNA in the 30S particle. May play a critical role in biogenesis of 30S subunits. This is Ribosomal RNA small subunit methyltransferase A from Burkholderia ambifaria (strain MC40-6).